The primary structure comprises 258 residues: Ubiquinone/menaquinone biosynthesis C-methyltransferase UbiE (258 aa).

Residues 1 to 20 (MSESRTSADGGMETSYGFRE) are disordered. S-adenosyl-L-methionine-binding positions include T81, D102, and 130-131 (NA).

The protein belongs to the class I-like SAM-binding methyltransferase superfamily. MenG/UbiE family.

The enzyme catalyses a 2-demethylmenaquinol + S-adenosyl-L-methionine = a menaquinol + S-adenosyl-L-homocysteine + H(+). It carries out the reaction a 2-methoxy-6-(all-trans-polyprenyl)benzene-1,4-diol + S-adenosyl-L-methionine = a 5-methoxy-2-methyl-3-(all-trans-polyprenyl)benzene-1,4-diol + S-adenosyl-L-homocysteine + H(+). Its pathway is quinol/quinone metabolism; menaquinone biosynthesis; menaquinol from 1,4-dihydroxy-2-naphthoate: step 2/2. It participates in cofactor biosynthesis; ubiquinone biosynthesis. Its function is as follows. Methyltransferase required for the conversion of demethylmenaquinol (DMKH2) to menaquinol (MKH2) and the conversion of 2-polyprenyl-6-methoxy-1,4-benzoquinol (DDMQH2) to 2-polyprenyl-3-methyl-6-methoxy-1,4-benzoquinol (DMQH2). The chain is Ubiquinone/menaquinone biosynthesis C-methyltransferase UbiE from Rhizobium etli (strain ATCC 51251 / DSM 11541 / JCM 21823 / NBRC 15573 / CFN 42).